Here is a 65-residue protein sequence, read N- to C-terminus: Adrenergic toxin rho-elapitoxin-Dp1a (65 aa).

4 disulfides stabilise this stretch: C3/C24, C17/C42, C46/C57, and C58/C63.

This sequence belongs to the three-finger toxin family. Short-chain subfamily. Aminergic toxin sub-subfamily. As to expression, expressed by the venom gland.

The protein resides in the secreted. Its function is as follows. This toxin shows activities on different G-protein coupled receptors. It is highly potent on various alpha-adrenoceptors (ADRA) (subnanomolar affinity for ADRA1A). Order of potency is the following: ADRA1A &gt; ADRA1B &gt; ADRA1D &gt; ADRA2C. It is also found to reversibly bind to muscarinic acetylcholine receptors (CHRM), but the affinity is much weaker (CHRM1 and CHRM2, Ki&gt;1 uM; CHRM3, Ki=140 nM; CHRM4, Ki=120 nM; CHRM5, Ki=350 nM). The chain is Adrenergic toxin rho-elapitoxin-Dp1a from Dendroaspis polylepis polylepis (Black mamba).